A 643-amino-acid chain; its full sequence is Inner kinetochore subunit cnp3 (643 aa).

Disordered regions lie at residues 55–209 (SIHL…AFPD) and 224–386 (SIKD…QSDS). 2 stretches are compositionally biased toward low complexity: residues 85–97 (AASDEASHASSSD) and 104–125 (DIPSSPLLMNSRALRASRGSSG). Basic and acidic residues predominate over residues 166–185 (DFSRIKASPDRKKFEPRRST). Polar residues-rich tracts occupy residues 235–261 (YIQTISKPRRSYVQNNKSEQTIKPSKQ), 295–304 (LNRSLANNSQ), and 313–322 (KPLQESSINS). Composition is skewed to basic residues over residues 332-341 (VKRKRGRPRK) and 360-370 (GAKKPAIRNAK). Residues 333–345 (KRKRGRPRKNKLE) constitute a DNA-binding region (a.T hook).

It belongs to the CENP-C/MIF2 family. As to quaternary structure, component of the inner kinetochore constitutive centromere-associated network (CCAN) (also known as central kinetochore Sim4 complex in fission yeast), which is composed of at least cnl2, cnp3, cnp20, fta1, fta2, fta3, fta4, fta6, fta7, mal2, mhf1, mhf2, mis6, mis15, mis17, sim4 and wip1.

It is found in the nucleus. The protein localises to the nucleoplasm. Functionally, component of the kinetochore, a multiprotein complex that assembles on centromeric DNA and attaches chromosomes to spindle microtubules, mediating chromosome segregation and sister chromatid segregation during meiosis and mitosis. Component of the inner kinetochore constitutive centromere-associated network (CCAN), which serves as a structural platform for outer kinetochore assembly. The sequence is that of Inner kinetochore subunit cnp3 (cnp3) from Schizosaccharomyces pombe (strain 972 / ATCC 24843) (Fission yeast).